The sequence spans 605 residues: F-box/WD repeat-containing protein 1A (605 aa).

The segment at 128 to 177 (ASYEKEKELCVKYFEQWSESDQVEFVEHLISQMCHYQHGHINSYLKPMLQ) is homodimerization domain D. Residues 190–228 (DHIAENILSYLDAKSLCAAELVCKEWYRVTSDGMLWKKL) form the F-box domain. A required for down-regulation of SNAI1 region spans residues 190–228 (DHIAENILSYLDAKSLCAAELVCKEWYRVTSDGMLWKKL). 7 WD repeats span residues 301-338 (ETSK…CKRI), 341-378 (GHTG…MLNT), 381-418 (HHCE…DITL), 424-461 (GHRA…FVRT), 464-503 (GHKR…RVLE), 505-541 (HEEL…DPRA), and 553-590 (EHSG…AAQA).

In terms of assembly, homodimer. Self-associates. Component of the SCF(BTRC) complex formed of CUL1, SKP1, RBX1 and a BTRC dimer. Direct interaction with SKP1 occurs via the F-box domain. Interacts with phosphorylated ubiquitination substrates SMAD3 and SMAD4. Interacts with phosphorylated ubiquitination substrates CTNNB1, NFKBIA, NFKBIB, NFKBIE, NFKB1/nuclear factor NF-kappa-B p105 subunit, ATF4, CDC25A, DLG1, FBXO5 and SNAI1; the interaction requires the phosphorylation of the 2 serine residues in the substrate destruction motif D-S-G-X(2,3,4)-S. Binds UBQLN1. Interacts with CDC34 and UBE2R2. Interacts with FBXW11. Interacts with CUL4A and DDB1. Part of a SCF(BTRC)-like complex lacking CUL1, which is associated with phosphorylated NKBIA and RELA; RELA interacts directly with NFKBIA. Interacts with the phosphorylated form of GLI3. Interacts with CLU. Interacts with PER1 (phosphorylated), PER2 (phosphorylated) and PER3. Interacts with phosphorylated ubiquitination substrate CEP68. Interacts with ZC3H12A; this interaction occurs when ZC3H12A is phosphorylated in a IKBKB/IKKB-dependent manner. Interacts with HSF1; this interaction occurs during mitosis and induces HSF1 ubiquitin-dependent degradation, a process inhibited by CDC20. Interacts with NFE2L1. Interacts with INAVA. Interacts with IL10RA; this interaction leads to IL10RA ubiquitination and subsequent degradation. Interacts with REST. Interacts with KLF4; this interaction leads to KLF4 ubiquitination and subsequent degradation. Interacts with UBR2, as part of a SCF(BTRC) complex; the interaction mediates 'Lys-48'-linked ubiquitination of UBR2 and is regulated by DUSP22 in the T-cell receptor signaling pathway. As to quaternary structure, (Microbial infection) Interacts with vaccinia virus A49; this interaction inhibits NF-kappa-B activation. (Microbial infection) Interacts with HIV-1 Vpu. Ubiquitinated. Deubiquitinated by OTUD5, promoting its stability. As to expression, expressed in epididymis (at protein level).

The protein localises to the cytoplasm. It is found in the nucleus. It participates in protein modification; protein ubiquitination. In terms of biological role, substrate recognition component of a SCF (SKP1-CUL1-F-box protein) E3 ubiquitin-protein ligase complex which mediates the ubiquitination and subsequent proteasomal degradation of target proteins. Recognizes and binds to phosphorylated target proteins. SCF(BTRC) mediates the ubiquitination of CTNNB1 and participates in Wnt signaling. SCF(BTRC) mediates the ubiquitination of phosphorylated NFKB1, ATF4, CDC25A, DLG1, FBXO5, PER1, SMAD3, SMAD4, SNAI1 and probably NFKB2. SCF(BTRC) mediates the ubiquitination of NFKBIA, NFKBIB and NFKBIE; the degradation frees the associated NFKB1 to translocate into the nucleus and to activate transcription. Ubiquitination of NFKBIA occurs at 'Lys-21' and 'Lys-22'. The SCF(FBXW11) complex also regulates NF-kappa-B by mediating ubiquitination of phosphorylated NFKB1: specifically ubiquitinates the p105 form of NFKB1, leading to its degradation. SCF(BTRC) mediates the ubiquitination of CEP68; this is required for centriole separation during mitosis. SCF(BTRC) mediates the ubiquitination and subsequent degradation of nuclear NFE2L1. Has an essential role in the control of the clock-dependent transcription via degradation of phosphorylated PER1 and PER2. May be involved in ubiquitination and subsequent proteasomal degradation through a DBB1-CUL4 E3 ubiquitin-protein ligase. Required for activation of NFKB-mediated transcription by IL1B, MAP3K14, MAP3K1, IKBKB and TNF. Required for proteolytic processing of GLI3. Mediates ubiquitination of REST, thereby leading to its proteasomal degradation. SCF(BTRC) mediates the ubiquitination and subsequent proteasomal degradation of KLF4; thereby negatively regulating cell pluripotency maintenance and embryogenesis. SCF(BTRC) acts as a regulator of mTORC1 signaling pathway by catalyzing ubiquitination and subsequent proteasomal degradation of phosphorylated DEPTOR, TFE3 and MITF. SCF(BTRC) directs 'Lys-48'-linked ubiquitination of UBR2 in the T-cell receptor signaling pathway. This is F-box/WD repeat-containing protein 1A (BTRC) from Homo sapiens (Human).